Consider the following 113-residue polypeptide: Large ribosomal subunit protein bL17 (113 aa).

It belongs to the bacterial ribosomal protein bL17 family. In terms of assembly, part of the 50S ribosomal subunit. Contacts protein L32.

This chain is Large ribosomal subunit protein bL17, found in Natranaerobius thermophilus (strain ATCC BAA-1301 / DSM 18059 / JW/NM-WN-LF).